Here is a 421-residue protein sequence, read N- to C-terminus: Divalent metal cation transporter MntH (421 aa).

11 helical membrane passes run 27–47 (LGPA…ATNI), 51–71 (SLFD…AIFL), 100–120 (WFLW…EFLG), 128–148 (LFHI…FAIV), 160–180 (GIIF…LFIA), 201–221 (AMLI…IYLH), 248–268 (ILVA…VSAA), 289–309 (PLLG…SGFS), 337–357 (LVTM…LKSL), 358–378 (IVSQ…LLLI), and 396–416 (IMGV…LYLT).

Belongs to the NRAMP family.

The protein resides in the cell membrane. H(+)-stimulated, divalent metal cation uptake system. This is Divalent metal cation transporter MntH from Caldanaerobacter subterraneus subsp. tengcongensis (strain DSM 15242 / JCM 11007 / NBRC 100824 / MB4) (Thermoanaerobacter tengcongensis).